The following is a 288-amino-acid chain: Intermediate transcription factor 3 small subunit (288 aa).

It belongs to the orthopoxvirus OPG134 family. In terms of assembly, heterodimer of a 45 kDa (A23R) and a 32 kDa (A8R) subunit to form the virus intermediate transcription factor (VITF)-3.

In terms of biological role, acts with RNA polymerase to initiate transcription from intermediate gene promoters. The protein is Intermediate transcription factor 3 small subunit (OPG134) of Vaccinia virus (strain Copenhagen) (VACV).